We begin with the raw amino-acid sequence, 279 residues long: MDGCHLSRDKLQGDGEGCDLKTSDYLKKYGVRLKKHLGQVFLSDDRIAKRIVKAAELTPEDVVVEIGAGAGTLTEELAKTGARVIAYEIDESLAPILQERLSKYPNVELRFEDFLKAKNVPEGAICVSNIPYNITGPLMEKIIEWKFKRAIVMIQKEVGERILAKPGKKTYGYLSVVVQTFYEVKKLFDVSRSCFVPNPEVDSTVVDLKRKPVDLDFEKFKKFVSMIFAKKRKTLKNNLRPFLSIFEGVDLSRRAEQLTVEEIVELYEKWRRALECSRG.

The S-adenosyl-L-methionine site is built by Leu42, Gly67, Glu88, Asp113, and Asn129.

This sequence belongs to the class I-like SAM-binding methyltransferase superfamily. rRNA adenine N(6)-methyltransferase family. RsmA subfamily.

It localises to the cytoplasm. It catalyses the reaction adenosine(1518)/adenosine(1519) in 16S rRNA + 4 S-adenosyl-L-methionine = N(6)-dimethyladenosine(1518)/N(6)-dimethyladenosine(1519) in 16S rRNA + 4 S-adenosyl-L-homocysteine + 4 H(+). Its function is as follows. Specifically dimethylates two adjacent adenosines (A1518 and A1519) in the loop of a conserved hairpin near the 3'-end of 16S rRNA in the 30S particle. May play a critical role in biogenesis of 30S subunits. In Thermotoga maritima (strain ATCC 43589 / DSM 3109 / JCM 10099 / NBRC 100826 / MSB8), this protein is Ribosomal RNA small subunit methyltransferase A.